Consider the following 295-residue polypeptide: Protoheme IX farnesyltransferase (295 aa).

The next 9 membrane-spanning stretches (helical) occupy residues glycine 31 to alanine 51, valine 54 to leucine 74, phenylalanine 98 to alanine 118, glycine 121 to methionine 141, threonine 147 to valine 167, alanine 173 to isoleucine 193, leucine 220 to glycine 240, glycine 245 to isoleucine 265, and alanine 273 to leucine 293.

Belongs to the UbiA prenyltransferase family. Protoheme IX farnesyltransferase subfamily.

Its subcellular location is the cell inner membrane. It carries out the reaction heme b + (2E,6E)-farnesyl diphosphate + H2O = Fe(II)-heme o + diphosphate. It participates in porphyrin-containing compound metabolism; heme O biosynthesis; heme O from protoheme: step 1/1. Its function is as follows. Converts heme B (protoheme IX) to heme O by substitution of the vinyl group on carbon 2 of heme B porphyrin ring with a hydroxyethyl farnesyl side group. The protein is Protoheme IX farnesyltransferase of Anaeromyxobacter dehalogenans (strain 2CP-C).